A 360-amino-acid chain; its full sequence is Photosystem II protein D1 2 (360 aa).

The next 3 membrane-spanning stretches (helical) occupy residues 29 to 46 (YIGWFGVLMIPTLLAATT), 118 to 133 (HFLTGVFCYLGREWEL), and 142 to 156 (WICLAFSAPVAAATA). Residue His-118 coordinates chlorophyll a. Tyr-126 serves as a coordination point for pheophytin a. The [CaMn4O5] cluster site is built by Asp-170 and Glu-189. The helical transmembrane segment at 197-218 (FHMLGVAGVFGGSLFSAMHGSL) threads the bilayer. His-198 contributes to the chlorophyll a binding site. A quinone-binding positions include His-215 and 264-265 (SF). Residue His-215 coordinates Fe cation. His-272 contributes to the Fe cation binding site. A helical membrane pass occupies residues 274-288 (FLAAWPVIGIWFTAL). Residues His-332, Glu-333, Asp-342, and Ala-344 each coordinate [CaMn4O5] cluster. Residues 345 to 360 (AGEVAPVALTAPAING) constitute a propeptide that is removed on maturation.

This sequence belongs to the reaction center PufL/M/PsbA/D family. As to quaternary structure, PSII is composed of 1 copy each of membrane proteins PsbA, PsbB, PsbC, PsbD, PsbE, PsbF, PsbH, PsbI, PsbJ, PsbK, PsbL, PsbM, PsbT, PsbX, PsbY, PsbZ, Psb30/Ycf12, peripheral proteins PsbO, CyanoQ (PsbQ), PsbU, PsbV and a large number of cofactors. It forms dimeric complexes. It depends on The D1/D2 heterodimer binds P680, chlorophylls that are the primary electron donor of PSII, and subsequent electron acceptors. It shares a non-heme iron and each subunit binds pheophytin, quinone, additional chlorophylls, carotenoids and lipids. D1 provides most of the ligands for the Mn4-Ca-O5 cluster of the oxygen-evolving complex (OEC). There is also a Cl(-1) ion associated with D1 and D2, which is required for oxygen evolution. The PSII complex binds additional chlorophylls, carotenoids and specific lipids. as a cofactor. In terms of processing, tyr-161 forms a radical intermediate that is referred to as redox-active TyrZ, YZ or Y-Z. Post-translationally, C-terminally processed by CtpA; processing is essential to allow assembly of the oxygen-evolving complex and thus photosynthetic growth.

It is found in the cellular thylakoid membrane. The catalysed reaction is 2 a plastoquinone + 4 hnu + 2 H2O = 2 a plastoquinol + O2. Functionally, photosystem II (PSII) is a light-driven water:plastoquinone oxidoreductase that uses light energy to abstract electrons from H(2)O, generating O(2) and a proton gradient subsequently used for ATP formation. It consists of a core antenna complex that captures photons, and an electron transfer chain that converts photonic excitation into a charge separation. The D1/D2 (PsbA/PsbD) reaction center heterodimer binds P680, the primary electron donor of PSII as well as several subsequent electron acceptors. The polypeptide is Photosystem II protein D1 2 (Trichormus variabilis (strain ATCC 29413 / PCC 7937) (Anabaena variabilis)).